Reading from the N-terminus, the 456-residue chain is tRNA modification GTPase MnmE (456 aa).

Residues Arg24, Glu81, and Lys120 each contribute to the (6S)-5-formyl-5,6,7,8-tetrahydrofolate site. In terms of domain architecture, TrmE-type G spans 216 to 379; the sequence is GMTVVIAGRP…LRDHLKACMG (164 aa). Position 226 (Asn226) interacts with K(+). GTP contacts are provided by residues 226–231, 245–251, 270–273, and 335–338; these read NAGKSS, TEIAGTT, DTAG, and NKAD. Ser230 provides a ligand contact to Mg(2+). Thr245, Ile247, and Thr250 together coordinate K(+). Thr251 serves as a coordination point for Mg(2+). Residue Lys456 coordinates (6S)-5-formyl-5,6,7,8-tetrahydrofolate.

Belongs to the TRAFAC class TrmE-Era-EngA-EngB-Septin-like GTPase superfamily. TrmE GTPase family. In terms of assembly, homodimer. Heterotetramer of two MnmE and two MnmG subunits. The cofactor is K(+).

It localises to the cytoplasm. Its function is as follows. Exhibits a very high intrinsic GTPase hydrolysis rate. Involved in the addition of a carboxymethylaminomethyl (cmnm) group at the wobble position (U34) of certain tRNAs, forming tRNA-cmnm(5)s(2)U34. The chain is tRNA modification GTPase MnmE from Pseudomonas fluorescens (strain Pf0-1).